Consider the following 272-residue polypeptide: R-spondin-3 (272 aa).

A signal peptide spans 1–21; that stretch reads MHLRLISWLFIILNFMEYIGS. FU repeat units lie at residues 35-86 and 92-135; these read PNVS…GYYG and INKC…GLEA. Residue Asn-36 is glycosylated (N-linked (GlcNAc...) asparagine). Disulfide bonds link Cys-41–Cys-48, Cys-45–Cys-54, Cys-57–Cys-76, Cys-80–Cys-95, Cys-98–Cys-105, Cys-102–Cys-111, Cys-114–Cys-125, Cys-129–Cys-142, Cys-148–Cys-190, Cys-159–Cys-166, and Cys-199–Cys-206. Positions 147 to 207 constitute a TSP type-1 domain; that stretch reads HCEVSEWNPW…KCTVQRKKCQ (61 aa). The interval 201–272 is disordered; the sequence is VQRKKCQKGE…QKSVSVSTVH (72 aa). Over residues 213–223 the composition is skewed to basic residues; that stretch reads KKGRERKRKKP. The span at 224–252 shows a compositional bias: basic and acidic residues; that stretch reads NKGESKEAIPDSKSLESSKEIPEQRENKQ.

It belongs to the R-spondin family. Interacts with the extracellular domain of FZD8 and LRP6. It however does not form a ternary complex with FZD8 and LRP6. Interacts with WNT1. Binds heparin. Interacts with LGR4, LGR5 and LGR6. Ubiquitously expressed. Expressed at higher level in placenta, small intestine, fetal thymus and lymph node. Highly expressed in endothelial cells.

Its subcellular location is the secreted. Functionally, activator of the canonical Wnt signaling pathway by acting as a ligand for LGR4-6 receptors, which acts as a key regulator of angiogenesis. Upon binding to LGR4-6 (LGR4, LGR5 or LGR6), LGR4-6 associate with phosphorylated LRP6 and frizzled receptors that are activated by extracellular Wnt receptors, triggering the canonical Wnt signaling pathway to increase expression of target genes. Also regulates the canonical Wnt/beta-catenin-dependent pathway and non-canonical Wnt signaling by acting as an inhibitor of ZNRF3, an important regulator of the Wnt signaling pathway. Acts as a ligand for frizzled FZD8 and LRP6. May negatively regulate the TGF-beta pathway. Acts as a key regulator of angiogenesis by controlling vascular stability and pruning: acts by activating the non-canonical Wnt signaling pathway in endothelial cells. Can also amplify Wnt signaling pathway independently of LGR4-6 receptors, possibly by acting as a direct antagonistic ligand to RNF43 and ZNRF3. The chain is R-spondin-3 (RSPO3) from Homo sapiens (Human).